A 328-amino-acid chain; its full sequence is MQSIGIKGMGYYVPENVFTNFDFEKIIDTSDEWIRTRTGIIERRFASKDQATSDLATEASLKAIKNAKISKEDVDMIILATTTADYIAQGAACIVQNKLGLKKIPCFDLNAACTGFIYGLEVAYSLVKSGLYKNILVIGAETLSRIVDMQNRNTCVLFGDGAAAAIIGEVEKGYGFLGFSIGAEGEDNMILKVPAGGSKKPNNEETIKNRENFVIMKGQDVFKFAVSTLPKVTSDALEKAKLKVNDLSMVFPHQANLRIIESAAKRMKFPLEKFYMNLSRYGNTSSASVGIALGEAIEKGLVKKGDNIALTGFGGGLTYGSTIIKWAY.

Active-site residues include C113 and H253. An ACP-binding region spans residues 254-258 (QANLR). N283 is an active-site residue.

This sequence belongs to the thiolase-like superfamily. FabH family. As to quaternary structure, homodimer.

It is found in the cytoplasm. The enzyme catalyses malonyl-[ACP] + acetyl-CoA + H(+) = 3-oxobutanoyl-[ACP] + CO2 + CoA. It functions in the pathway lipid metabolism; fatty acid biosynthesis. Functionally, catalyzes the condensation reaction of fatty acid synthesis by the addition to an acyl acceptor of two carbons from malonyl-ACP. Catalyzes the first condensation reaction which initiates fatty acid synthesis and may therefore play a role in governing the total rate of fatty acid production. Possesses both acetoacetyl-ACP synthase and acetyl transacylase activities. Its substrate specificity determines the biosynthesis of branched-chain and/or straight-chain of fatty acids. The sequence is that of Beta-ketoacyl-[acyl-carrier-protein] synthase III from Fusobacterium nucleatum subsp. nucleatum (strain ATCC 25586 / DSM 15643 / BCRC 10681 / CIP 101130 / JCM 8532 / KCTC 2640 / LMG 13131 / VPI 4355).